A 559-amino-acid chain; its full sequence is ATP synthase subunit beta-3, mitochondrial (559 aa).

Residues 1–28 show a composition bias toward low complexity; sequence MASRRILSSLLRSSSSRSTSKSSLIGSR. The tract at residues 1–39 is disordered; it reads MASRRILSSLLRSSSSRSTSKSSLIGSRNPRLLSPGPAH. The N-terminal 54 residues, 1 to 54, are a transit peptide targeting the mitochondrion; sequence MASRRILSSLLRSSSSRSTSKSSLIGSRNPRLLSPGPAHGAAPCGTLLGRVAEY. At Ser-62 the chain carries Phosphoserine. Residue 234 to 241 coordinates ATP; that stretch reads GGAGVGKT.

This sequence belongs to the ATPase alpha/beta chains family. In terms of assembly, F-type ATPases have 2 components, CF(1) - the catalytic core - and CF(0) - the membrane proton channel. CF(1) has five subunits: alpha(3), beta(3), gamma(1), delta(1), epsilon(1). CF(0) has three main subunits: a, b and c.

It is found in the mitochondrion. The protein localises to the mitochondrion inner membrane. The catalysed reaction is ATP + H2O + 4 H(+)(in) = ADP + phosphate + 5 H(+)(out). Mitochondrial membrane ATP synthase (F(1)F(0) ATP synthase or Complex V) produces ATP from ADP in the presence of a proton gradient across the membrane which is generated by electron transport complexes of the respiratory chain. F-type ATPases consist of two structural domains, F(1) - containing the extramembraneous catalytic core, and F(0) - containing the membrane proton channel, linked together by a central stalk and a peripheral stalk. During catalysis, ATP synthesis in the catalytic domain of F(1) is coupled via a rotary mechanism of the central stalk subunits to proton translocation. Subunits alpha and beta form the catalytic core in F(1). Rotation of the central stalk against the surrounding alpha(3)beta(3) subunits leads to hydrolysis of ATP in three separate catalytic sites on the beta subunits. This Arabidopsis thaliana (Mouse-ear cress) protein is ATP synthase subunit beta-3, mitochondrial.